The chain runs to 406 residues: Phosphoglycerate kinase (406 aa).

Substrate contacts are provided by residues 23–25 (DIN), arginine 38, 61–64 (HQGR), arginine 117, and arginine 157. ATP contacts are provided by residues glutamate 331 and 357-360 (GGHI).

Belongs to the phosphoglycerate kinase family. In terms of assembly, monomer.

It localises to the cytoplasm. It catalyses the reaction (2R)-3-phosphoglycerate + ATP = (2R)-3-phospho-glyceroyl phosphate + ADP. It participates in carbohydrate degradation; glycolysis; pyruvate from D-glyceraldehyde 3-phosphate: step 2/5. The protein is Phosphoglycerate kinase of Methanopyrus kandleri (strain AV19 / DSM 6324 / JCM 9639 / NBRC 100938).